A 254-amino-acid polypeptide reads, in one-letter code: MISDYEGPTPTKKFDQDILFDYSEGEKEFTFELLDSYISSVEEHLPELLNSFEAKDLKGAVLHSHDIKGSSSYIGCEAVRYVSGKIEAYCKNDELEKAESFYPELKKEVEEVFKILSDFKKNWDKNHGEGGSDDGGDDNESEPTENNNNDGSSVNNNDSSSGGGGKDIENKNTDENTGKNLNERSKSPVPLQTTLKPVTIETPKTASDKIATETPTSLANNTNSSSNNNSKNENGLNSKQPQTSSNSPTKIQTK.

The HPt domain maps to 26–123 (EKEFTFELLD…KILSDFKKNW (98 aa)). A Phosphohistidine modification is found at histidine 65. Positions 124-254 (DKNHGEGGSD…SNSPTKIQTK (131 aa)) are disordered. Over residues 131 to 143 (GSDDGGDDNESEP) the composition is skewed to acidic residues. The span at 146-160 (NNNNDGSSVNNNDSS) shows a compositional bias: low complexity. Residues 166–186 (KDIENKNTDENTGKNLNERSK) show a composition bias toward basic and acidic residues. Residues 220–238 (NNTNSSSNNNSKNENGLNS) are compositionally biased toward low complexity. Positions 239 to 254 (KQPQTSSNSPTKIQTK) are enriched in polar residues.

The phosphorelay mechanism involves the sequential transfer of a phosphate group from 'Asp-212' of pde2 to His-65 of rdeA. In vitro, dephosphorylated by dokA.

It is found in the cytoplasm. In terms of biological role, phosphorelay protein that supplies phosphate to regA or accepts phosphate from regA; depending on the relative concentration of the phosphodonor proteins. In vitro, acts as a substrate for cheA (bacterial kinase). Plays a role in the development. ypd1 (yeast) can complement rdeA defect. The polypeptide is Phosphorelay intermediate protein rdeA (rdeA) (Dictyostelium discoideum (Social amoeba)).